The sequence spans 309 residues: Glutaminase (309 aa).

Substrate-binding residues include S64, N114, E160, N167, Y191, Y243, and V261.

It belongs to the glutaminase family. In terms of assembly, homotetramer.

The catalysed reaction is L-glutamine + H2O = L-glutamate + NH4(+). The protein is Glutaminase of Rhizobium leguminosarum bv. trifolii (strain WSM2304).